Consider the following 489-residue polypeptide: Rhamnulokinase (489 aa).

A13–R17 contributes to the ATP binding site. Cysteines 68 and 222 form a disulfide. Substrate-binding positions include G83 and H236–T238. D237 (proton acceptor) is an active-site residue. Residue T259 coordinates ATP. N296 lines the substrate pocket. Residue Q304 participates in ATP binding. Residues C353 and C370 are joined by a disulfide bond. Residue G402 participates in ATP binding. An intrachain disulfide couples C413 to C417.

The protein belongs to the rhamnulokinase family. As to quaternary structure, monomer. The cofactor is Mg(2+).

It carries out the reaction L-rhamnulose + ATP = L-rhamnulose 1-phosphate + ADP + H(+). The protein operates within carbohydrate degradation; L-rhamnose degradation; glycerone phosphate from L-rhamnose: step 2/3. Functionally, involved in the catabolism of L-rhamnose (6-deoxy-L-mannose). Catalyzes the transfer of the gamma-phosphate group from ATP to the 1-hydroxyl group of L-rhamnulose to yield L-rhamnulose 1-phosphate. This chain is Rhamnulokinase, found in Escherichia fergusonii (strain ATCC 35469 / DSM 13698 / CCUG 18766 / IAM 14443 / JCM 21226 / LMG 7866 / NBRC 102419 / NCTC 12128 / CDC 0568-73).